Reading from the N-terminus, the 154-residue chain is UPF0756 membrane protein BPUM_2558 (154 aa).

Transmembrane regions (helical) follow at residues 8–28 (FLVL…ILAV), 54–74 (WGVT…DIGF), 87–107 (WIAL…IVLL), and 117–137 (LVFG…GPLI).

Belongs to the UPF0756 family.

It localises to the cell membrane. The sequence is that of UPF0756 membrane protein BPUM_2558 from Bacillus pumilus (strain SAFR-032).